We begin with the raw amino-acid sequence, 545 residues long: Methionine--tRNA ligase (545 aa).

The 'HIGH' region signature appears at 15-25 (PYANGPIHLGH). The Zn(2+) site is built by C146, C149, C159, and C162. The short motif at 332 to 336 (KMSKS) is the 'KMSKS' region element. ATP is bound at residue K335.

Belongs to the class-I aminoacyl-tRNA synthetase family. MetG type 1 subfamily. In terms of assembly, monomer. The cofactor is Zn(2+).

It localises to the cytoplasm. The catalysed reaction is tRNA(Met) + L-methionine + ATP = L-methionyl-tRNA(Met) + AMP + diphosphate. Its function is as follows. Is required not only for elongation of protein synthesis but also for the initiation of all mRNA translation through initiator tRNA(fMet) aminoacylation. In Hamiltonella defensa subsp. Acyrthosiphon pisum (strain 5AT), this protein is Methionine--tRNA ligase.